Here is a 1451-residue protein sequence, read N- to C-terminus: DNA excision repair protein ERCC-6-like (1451 aa).

A TPR 1 repeat occupies 27–60 (YDRYRQKGKEAALNGELPRALELFQLAYQLQPSE). In terms of domain architecture, Helicase ATP-binding spans 118–286 (SLYRDGRKGG…WALFDFACQG (169 aa)). Residue 131 to 138 (DDMGLGKT) participates in ATP binding. The DEAH box motif lies at 237–240 (DEAH). Residues 479-639 (FVVSLMECLR…PFRYFSKQEL (161 aa)) form the Helicase C-terminal domain. 7 disordered regions span residues 647 to 669 (DTRS…RSDT), 778 to 804 (NSFD…ETAS), 935 to 1006 (DDTS…ATTD), 1035 to 1054 (DEEV…EFQL), 1063 to 1083 (LEEP…NYND), 1096 to 1140 (RSTP…LTSS), and 1182 to 1343 (LLEN…SAEL). Acidic residues predominate over residues 781 to 804 (DEPEFEEDEQNLPSAEDAEMETAS). 2 stretches are compositionally biased toward polar residues: residues 944-964 (SDFN…SPSL) and 992-1002 (QVLSSPLSQHE). Ser961 is subject to Phosphoserine. The span at 1035-1050 (DEEVHEVEESAAEESP) shows a compositional bias: acidic residues. Positions 1063-1074 (LEEPSINHDKQN) are enriched in basic and acidic residues. Residues 1121–1132 (DTEEEEEEEEES) show a composition bias toward acidic residues. Residues 1213-1230 (VQTSSGDNSKSYETSEAN) show a composition bias toward polar residues. Residues 1244–1278 (YREGKNTSDKVSESNETHSEEFAEEEKPSGDKSES) show a composition bias toward basic and acidic residues. Residues 1310–1341 (SEADESVVEEEEPSGETLNTEESEMGEEEESA) show a composition bias toward acidic residues. The stretch at 1402 to 1435 (YNLLVLSGKQSLAEGRKQEALDFFLKAIDINTGD) is one TPR 2 repeat.

It belongs to the SNF2/RAD54 helicase family.

The protein resides in the chromosome. It localises to the centromere. Its subcellular location is the kinetochore. It catalyses the reaction ATP + H2O = ADP + phosphate + H(+). In terms of biological role, DNA helicase that acts as a tension sensor that associates with catenated DNA which is stretched under tension until it is resolved during anaphase. Functions as ATP-dependent DNA translocase. Can promote Holliday junction branch migration (in vitro). The chain is DNA excision repair protein ERCC-6-like (ercc6l) from Danio rerio (Zebrafish).